The primary structure comprises 742 residues: Ectonucleotide pyrophosphatase/phosphodiesterase 1 (742 aa).

Over 1 to 113 (MELQNDLESL…TGFHSKVPFK (113 aa)) the chain is Cytoplasmic. Residues 114–134 (IIFRTLFGSLVFAIFLILMIN) form a helical membrane-spanning segment. The Extracellular segment spans residues 135–742 (IAKPHHSTRV…SIDDLVDSDT (608 aa)). Residues asparagine 161 and asparagine 204 are each glycosylated (N-linked (GlcNAc...) asparagine). Residues 168-545 (PLTIVISLDG…VFTIGSHGYD (378 aa)) are phosphodiesterase. Threonine 219 serves as the catalytic Nucleophile. Asparagine 264, asparagine 296, and asparagine 403 each carry an N-linked (GlcNAc...) asparagine glycan. The span at 640–659 (EETEQDNVDNDNDDNDDGNT) shows a compositional bias: acidic residues. Disordered regions lie at residues 640 to 670 (EETE…SSSL) and 686 to 711 (TLLG…TAST). Low complexity predominate over residues 691-711 (TSPSSRSSSSSSIQASATAST).

This sequence belongs to the nucleotide pyrophosphatase/phosphodiesterase family. Autophosphorylated as part of the catalytic cycle of phosphodiesterase/pyrophosphatase activity. In terms of processing, N-glycosylated.

Its subcellular location is the membrane. It catalyses the reaction Hydrolytically removes 5'-nucleotides successively from the 3'-hydroxy termini of 3'-hydroxy-terminated oligonucleotides.. The catalysed reaction is a ribonucleoside 5'-triphosphate + H2O = a ribonucleoside 5'-phosphate + diphosphate + H(+). The enzyme catalyses a 2'-deoxyribonucleoside 5'-triphosphate + H2O = a 2'-deoxyribonucleoside 5'-phosphate + diphosphate + H(+). Its function is as follows. Mediates extracellular nucleotide derived phosphate hydrolysis along with NPP2 and PHO5. In Saccharomyces cerevisiae (strain ATCC 204508 / S288c) (Baker's yeast), this protein is Ectonucleotide pyrophosphatase/phosphodiesterase 1 (NPP1).